The chain runs to 510 residues: Cytochrome P450 703A2 (510 aa).

The helical transmembrane segment at 2 to 22 threads the bilayer; it reads ILVLASLFAVLILNVLLWRWL. C451 lines the heme pocket.

The protein belongs to the cytochrome P450 family. The cofactor is heme.

It localises to the membrane. It carries out the reaction dodecanoate + reduced [NADPH--hemoprotein reductase] + O2 = 7-hydroxydodecanoate + oxidized [NADPH--hemoprotein reductase] + H2O + H(+). Its function is as follows. Involved in pollen wall development. Catalyzes the conversion of medium-chain saturated fatty acids to the corresponding monohydroxylated fatty acids, with a preferential hydroxylation of lauric acid at the C-7 position. In-chain hydroxylated fatty acids, together with omega-hydroxylated fatty acids, are key monomeric aliphatic building blocks for sporopollenin synthesis during exine formation. The protein is Cytochrome P450 703A2 of Arabidopsis thaliana (Mouse-ear cress).